We begin with the raw amino-acid sequence, 221 residues long: uncharacterized protein (221 aa).

Positions Tyr77–Asn96 form a DNA-binding region, H-T-H motif.

It to E.coli YdcF.

In terms of biological role, the imp locus inhibits the extrachromosomal maintenance of the streptomyces plasmid SLP1. May function as a transcriptional activator. This is an uncharacterized protein from Streptomyces coelicolor (strain ATCC BAA-471 / A3(2) / M145).